Reading from the N-terminus, the 711-residue chain is Zinc finger CCCH domain-containing protein 32 (711 aa).

Over residues Met1 to Ala21 the composition is skewed to low complexity. A disordered region spans residues Met1 to Pro23. 3 consecutive C3H1-type zinc fingers follow at residues Leu31 to Asn60, Arg62 to Ile88, and Gly112 to Gln139. Disordered regions lie at residues Lys221–Pro246, Arg339–Arg376, Ser405–Lys561, and Ala573–Asp701. Basic and acidic residues-rich tracts occupy residues Ser364–Arg376 and Arg413–Arg427. The span at Ala428–His437 shows a compositional bias: basic residues. Basic and acidic residues-rich tracts occupy residues Ser460–Ser509 and Lys585–His594. 2 stretches are compositionally biased toward acidic residues: residues Glu648 to Asn663 and Glu686 to Asp701.

The chain is Zinc finger CCCH domain-containing protein 32 from Oryza sativa subsp. japonica (Rice).